Reading from the N-terminus, the 393-residue chain is Cytotoxic and regulatory T-cell molecule (393 aa).

The first 16 residues, 1-16 (MWWGALSLLFWVPVQA), serve as a signal peptide directing secretion. An Ig-like V-type domain is found at 17–111 (AFLKMETVTV…SVKTKQVRVT (95 aa)). The Extracellular portion of the chain corresponds to 17–289 (AFLKMETVTV…HTGLARRKSG (273 aa)). 2 cysteine pairs are disulfide-bonded: cysteine 36-cysteine 96 and cysteine 139-cysteine 194. N-linked (GlcNAc...) asparagine glycans are attached at residues asparagine 85 and asparagine 176. One can recognise an Ig-like C2-type domain in the interval 119–208 (PTVEALVLRR…EGLHGRKLVA (90 aa)). Over residues 218-228 (DQETSDQETSD) the composition is skewed to acidic residues. Residues 218–280 (DQETSDQETS…GLSTEASAQH (63 aa)) form a disordered region. A compositionally biased stretch (low complexity) spans 229–246 (APEQSSLSSQALQQPTST). A compositionally biased stretch (polar residues) spans 247-256 (VSMMENSSIP). A compositionally biased stretch (basic and acidic residues) spans 257-267 (ETDKEEKEHAT). Residues 270–280 (PGLSTEASAQH) show a composition bias toward polar residues. Residues 290–310 (ILLLTLVSFLIFILFIIVQLF) traverse the membrane as a helical segment. Residues 311-393 (IMKLRKAHVV…KHSRVPESIV (83 aa)) lie on the Cytoplasmic side of the membrane. The interval 333–356 (ESYRSRSNNEETSSQENSSQAPQS) is disordered. A compositionally biased stretch (low complexity) spans 342-352 (EETSSQENSSQ). The PDZ-binding motif lies at 390–393 (ESIV).

This sequence belongs to the nectin family. In terms of assembly, monomer. May form homodimer (via Ig-like V-type domain). Interacts (via Ig-like V-type domain) with CADM1 (via Ig-like V-type domain); the interaction competes with CRTAM homodimerization and CADM1 homodimerization. Interacts (via PDZ-binding motif) with SCRIB (via PDZ domain 3); the interaction promotes CRTAM and SCRIB polarization in a subset of CD4+ T-cells. In terms of tissue distribution, in the immune system, expression is restricted to activated class-I MHC-restricted cells, including NKT, NK and CD8+ T-cells (at protein level). Transiently expressed in activated CD8+ T-cells and a subset of activated CD4+ T-cells (at protein level). Expressed in activated intestinal T-cells, specifically intraepithelial CD4+ CD8+ T-cells, intraepithelial CD4+ T-cells and, CD8+ T-cells in the intestine epithelium, lamina propria, Peyer's Patches and mesenteric lymph nodes. Also expressed in spleen, brain and testis.

The protein resides in the cell membrane. In terms of biological role, mediates heterophilic cell-cell adhesion which regulates the activation, differentiation and tissue retention of various T-cell subsets. Interaction with CADM1 promotes natural killer (NK) cell cytotoxicity and IFNG/interferon-gamma secretion by CD8+ T-cells in vitro as well as NK cell-mediated rejection of tumors expressing CADM1 in vivo. Regulates CD8+ T-cell proliferation in response to T-cell receptor (TCR) activation. Appears to be dispensable for CD8+ T-cell-mediated cytotoxicity. Interaction with SCRIB promotes the late phase of cellular polarization of a subset of CD4+ T-cells, which in turn regulates TCR-mediated proliferation and IFNG, IL17 and IL22 production. By interacting with CADM1 on CD8+ dendritic cells, regulates the retention of activated CD8+ T-cells within the draining lymph node. Required for the intestinal retention of intraepithelial CD4+ CD8+ T-cells and, to a lesser extent, intraepithelial and lamina propria CD8+ T-cells and CD4+ T-cells. Interaction with CADM1 promotes the adhesion to gut-associated CD103+ dendritic cells, which may facilitate the expression of gut-homing and adhesion molecules on T-cells and the conversion of CD4+ T-cells into CD4+ CD8+ T-cells. This Mus musculus (Mouse) protein is Cytotoxic and regulatory T-cell molecule.